We begin with the raw amino-acid sequence, 235 residues long: Fibrillarin-like rRNA/tRNA 2'-O-methyltransferase (235 aa).

S-adenosyl-L-methionine contacts are provided by residues 91–92 (TT), 110–111 (EF), 137–138 (DA), and 157–160 (DVAQ).

This sequence belongs to the methyltransferase superfamily. Fibrillarin family. In terms of assembly, interacts with nop5. Component of box C/D small ribonucleoprotein (sRNP) particles that contain rpl7ae, FlpA and nop5, plus a guide RNA.

In terms of biological role, involved in pre-rRNA and tRNA processing. Utilizes the methyl donor S-adenosyl-L-methionine to catalyze the site-specific 2'-hydroxyl methylation of ribose moieties in rRNA and tRNA. Site specificity is provided by a guide RNA that base pairs with the substrate. Methylation occurs at a characteristic distance from the sequence involved in base pairing with the guide RNA. This is Fibrillarin-like rRNA/tRNA 2'-O-methyltransferase from Pyrobaculum aerophilum (strain ATCC 51768 / DSM 7523 / JCM 9630 / CIP 104966 / NBRC 100827 / IM2).